A 1194-amino-acid polypeptide reads, in one-letter code: Multidrug efflux ATP-binding/permease protein BCG_0231 (1194 aa).

6 helical membrane-spanning segments follow: residues 20–40 (LLLG…VPLV), 56–76 (LAPW…LTYV), 130–150 (LLFD…GVAV), 153–173 (WLSV…GLIA), 258–278 (FALG…FVAF), and 279–299 (WACL…LTIA). Positions 21–301 (LLGFGAALAG…LAGMLTIAQQ (281 aa)) constitute an ABC transmembrane type-1 1 domain. In terms of domain architecture, ABC transporter 1 spans 334-568 (LEFQRVSFGY…CPRYRELLSP (235 aa)). 367–374 (GAPGSGKS) lines the ATP pocket. 6 consecutive transmembrane segments (helical) span residues 628-648 (ALSL…PLLI), 660-680 (VLSA…IRWV), 743-763 (LVVA…LLAI), 765-785 (ARLV…TWQF), 847-867 (LLAL…TLVL), and 878-898 (VISV…YTPI). The 283-residue stretch at 628 to 910 (ALSLLLVAVQ…LAQMFDDYQR (283 aa)) folds into the ABC transmembrane type-1 2 domain. Residues 942–1177 (VVFDAVHYSY…GGHYSRLWAA (236 aa)) enclose the ABC transporter 2 domain. 976–983 (GSTGSGKS) lines the ATP pocket.

The protein belongs to the ABC transporter superfamily. Lipid exporter (TC 3.A.1.106) family.

The protein resides in the cell inner membrane. Its function is as follows. Overexpression increases resistance to chloramphenicol, ampicillin, streptomycin, tetracyclin and vancomycin. This Mycobacterium bovis (strain BCG / Pasteur 1173P2) protein is Multidrug efflux ATP-binding/permease protein BCG_0231.